The chain runs to 128 residues: Sulfurtransferase TusD (128 aa).

The Cysteine persulfide intermediate role is filled by Cys78.

It belongs to the DsrE/TusD family. Heterohexamer, formed by a dimer of trimers. The hexameric TusBCD complex contains 2 copies each of TusB, TusC and TusD. The TusBCD complex interacts with TusE.

It localises to the cytoplasm. Functionally, part of a sulfur-relay system required for 2-thiolation of 5-methylaminomethyl-2-thiouridine (mnm(5)s(2)U) at tRNA wobble positions. Accepts sulfur from TusA and transfers it in turn to TusE. This Escherichia coli O45:K1 (strain S88 / ExPEC) protein is Sulfurtransferase TusD.